Consider the following 232-residue polypeptide: Phosphate import ATP-binding protein PstB (232 aa).

The ABC transporter domain occupies 1–227 (MFNINMEIKE…PKDRRTENYI (227 aa)). Residue 18–25 (GPSGCGKT) participates in ATP binding.

Belongs to the ABC transporter superfamily. Phosphate importer (TC 3.A.1.7) family. In terms of assembly, the complex is composed of two ATP-binding proteins (PstB), two transmembrane proteins (PstC and PstA) and a solute-binding protein (PstS).

It is found in the cell membrane. It carries out the reaction phosphate(out) + ATP + H2O = ADP + 2 phosphate(in) + H(+). Functionally, part of the ABC transporter complex PstSACB involved in phosphate import. Responsible for energy coupling to the transport system. The polypeptide is Phosphate import ATP-binding protein PstB (Mycoplasma mycoides subsp. mycoides SC (strain CCUG 32753 / NCTC 10114 / PG1)).